A 417-amino-acid polypeptide reads, in one-letter code: XO lethal protein 1 (417 aa).

Residues 373 to 417 (VSPGETSSEGISDEHHYEEYDEDDIMEEEEAPSARQDDTYDEDEE) form a disordered region. Positions 391–403 (EYDEDDIMEEEEA) are enriched in acidic residues.

This sequence belongs to the GHMP kinase family. Xol-1 subfamily.

It localises to the nucleus. Its function is as follows. Sex-determining factor that is required for sexual differentiation and X chromosome dosage compensation to promote male development. High expression during gastrulation triggers male development, while low expression at that time triggers hermaphrodite development. Although related to GHMP kinase, its mode of action remains unclear. This Caenorhabditis elegans protein is XO lethal protein 1.